The following is a 385-amino-acid chain: Rhomboid domain-containing protein 3 (385 aa).

The next 5 membrane-spanning stretches (helical) occupy residues 13-33, 58-78, 95-115, 146-166, and 168-188; these read ALPLASSVLMLLLSCLWLLGA, LGHTALPGLLLSLLLLPTLGW, VLALATGLLAVLLAGLGVSGA, WLLPWLLLALTLLLSSEPPFL, and LLCGLLTGLAYAAGAFQWLEL. The interval 238 to 264 is disordered; that stretch reads PPYLASSDSWPHSDGSAQLPPRLGPGQ. Positions 322 to 361 constitute a UBA domain; sequence SVSSLRLQQLQHMGFPTEQAAVALAATGRVEGAVSLLVEG.

The protein localises to the membrane. The protein is Rhomboid domain-containing protein 3 (Rhbdd3) of Mus musculus (Mouse).